Here is a 336-residue protein sequence, read N- to C-terminus: Formimidoylglutamase (336 aa).

The Mn(2+) site is built by H129, D160, H162, D164, D257, and D259.

It belongs to the arginase family. It depends on Mn(2+) as a cofactor.

It catalyses the reaction N-formimidoyl-L-glutamate + H2O = formamide + L-glutamate. It participates in amino-acid degradation; L-histidine degradation into L-glutamate; L-glutamate from N-formimidoyl-L-glutamate (hydrolase route): step 1/1. Functionally, catalyzes the conversion of N-formimidoyl-L-glutamate to L-glutamate and formamide. The sequence is that of Formimidoylglutamase from Vibrio vulnificus (strain CMCP6).